A 491-amino-acid chain; its full sequence is Cytosolic Fe-S cluster assembly factor NAR1 (491 aa).

[4Fe-4S] cluster-binding residues include C20, C59, C62, C65, C177, C231, C412, and C416.

The protein belongs to the NARF family. In terms of assembly, interacts with CIA1.

Functionally, component of the cytosolic Fe/S protein assembly machinery. Required for maturation of extramitochondrial Fe/S proteins. May play a role in the transfer of pre-assembled Fe/S clusters to target apoproteins. The sequence is that of Cytosolic Fe-S cluster assembly factor NAR1 (NAR1) from Saccharomyces cerevisiae (strain YJM789) (Baker's yeast).